Consider the following 202-residue polypeptide: MVNYPHNPICQKVTPLQKQQKHRQVDFANRGMSFEAAINATNAYYLAKGIAVIHKKPTPIQIVKVDYPRRSRAKIVEAYFKQASTTDYSGIYKGHYIDFEAKETRQKTAMPMKNFHAHQIEHMAAVLKQKGICFVLLHFATLKETYYLPAKALIDFYQIDRGNKSMPLDYIRKNGFEVKLGAFPQVPYLDIIEQKFLGGDYN.

Positions 85, 87, 100, and 119 each coordinate Mg(2+).

It belongs to the RecU family. It depends on Mg(2+) as a cofactor.

The protein localises to the cytoplasm. It carries out the reaction Endonucleolytic cleavage at a junction such as a reciprocal single-stranded crossover between two homologous DNA duplexes (Holliday junction).. Functionally, endonuclease that resolves Holliday junction intermediates in genetic recombination. Cleaves mobile four-strand junctions by introducing symmetrical nicks in paired strands. Promotes annealing of linear ssDNA with homologous dsDNA. Required for DNA repair, homologous recombination and chromosome segregation. The chain is Holliday junction resolvase RecU from Streptococcus equi subsp. zooepidemicus (strain H70).